The following is a 294-amino-acid chain: MKRKWERDLGLQGRMLFTMFLLAAVYLFFLAFLSYSGTPPVFMLLFVGAFMGIQYFYSDKMVLWTTGAHIVSESEAPQLHDMVTRLCVIADIPKPQIAIVQTRVPNAFATGRSPNKAVVAVTTGIMDKLTPAELEAVLAHELSHVKNRDMAVLTIASFISTIAFYIVRYSLYFGGMGGDRRRDGGGILLVWLVSIAVWVVSFLLIRALSRYREFAADRGSAIITGQPANLASALMKISGLMDRVPSEDLRKVEGMNAFFIIPAISGSSFMDIFSTHPSVEKRLAQLEKMQKEMS.

The next 2 helical transmembrane spans lie at 15-35 and 37-57; these read MLFTMFLLAAVYLFFLAFLSY and GTPPVFMLLFVGAFMGIQYFY. Position 140 (H140) interacts with Zn(2+). The active site involves E141. A Zn(2+)-binding site is contributed by H144. The next 2 membrane-spanning stretches (helical) occupy residues 151–171 and 185–205; these read AVLTIASFISTIAFYIVRYSL and GGILLVWLVSIAVWVVSFLLI. Zn(2+) is bound at residue E213.

This sequence belongs to the peptidase M48B family. It depends on Zn(2+) as a cofactor.

It is found in the cell membrane. The sequence is that of Protease HtpX homolog 2 from Methanosarcina acetivorans (strain ATCC 35395 / DSM 2834 / JCM 12185 / C2A).